A 166-amino-acid chain; its full sequence is Large ribosomal subunit protein uL10 (166 aa).

This sequence belongs to the universal ribosomal protein uL10 family. As to quaternary structure, part of the ribosomal stalk of the 50S ribosomal subunit. The N-terminus interacts with L11 and the large rRNA to form the base of the stalk. The C-terminus forms an elongated spine to which L12 dimers bind in a sequential fashion forming a multimeric L10(L12)X complex.

In terms of biological role, forms part of the ribosomal stalk, playing a central role in the interaction of the ribosome with GTP-bound translation factors. The sequence is that of Large ribosomal subunit protein uL10 from Aromatoleum aromaticum (strain DSM 19018 / LMG 30748 / EbN1) (Azoarcus sp. (strain EbN1)).